A 296-amino-acid chain; its full sequence is Putative thiosulfate sulfurtransferase SseA (296 aa).

2 Rhodanese domains span residues 31 to 138 and 168 to 286; these read GKPG…DTSL and ILGT…VPIT. Cys245 acts as the Cysteine persulfide intermediate in catalysis. Substrate is bound at residue Arg250.

It carries out the reaction thiosulfate + hydrogen cyanide = thiocyanate + sulfite + 2 H(+). The protein is Putative thiosulfate sulfurtransferase SseA (sseA) of Mycobacterium leprae (strain TN).